We begin with the raw amino-acid sequence, 111 residues long: PHD finger-like domain-containing protein 5A (111 aa).

Belongs to the PHF5 family.

The protein is PHD finger-like domain-containing protein 5A of Drosophila melanogaster (Fruit fly).